We begin with the raw amino-acid sequence, 214 residues long: Small ribosomal subunit protein eS6 (214 aa).

Belongs to the eukaryotic ribosomal protein eS6 family.

The chain is Small ribosomal subunit protein eS6 (rps6e) from Saccharolobus islandicus (strain Y.G.57.14 / Yellowstone #1) (Sulfolobus islandicus).